We begin with the raw amino-acid sequence, 195 residues long: Cytochrome c biogenesis ATP-binding export protein CcmA (195 aa).

The ABC transporter domain maps to 1–195 (MLSLHQLQFN…IKSAQILQLV (195 aa)). 33-40 (GANGSGKS) is an ATP binding site.

The protein belongs to the ABC transporter superfamily. CcmA exporter (TC 3.A.1.107) family. As to quaternary structure, the complex is composed of two ATP-binding proteins (CcmA) and two transmembrane proteins (CcmB).

It localises to the cell inner membrane. The catalysed reaction is heme b(in) + ATP + H2O = heme b(out) + ADP + phosphate + H(+). In terms of biological role, part of the ABC transporter complex CcmAB involved in the biogenesis of c-type cytochromes; once thought to export heme, this seems not to be the case, but its exact role is uncertain. Responsible for energy coupling to the transport system. This chain is Cytochrome c biogenesis ATP-binding export protein CcmA, found in Rickettsia felis (strain ATCC VR-1525 / URRWXCal2) (Rickettsia azadi).